The following is a 445-amino-acid chain: Tubulin beta-2A chain (445 aa).

The MREI motif signature appears at 1 to 4 (MREI). Gln11 lines the GTP pocket. Position 40 is a phosphoserine (Ser40). At Lys58 the chain carries N6-acetyllysine; alternate. N6-succinyllysine; alternate is present on Lys58. Lys58 participates in a covalent cross-link: Glycyl lysine isopeptide (Lys-Gly) (interchain with G-Cter in ubiquitin); alternate. The GTP site is built by Glu69, Ser138, Gly142, Thr143, and Gly144. Glu69 contacts Mg(2+). Ser172 is subject to Phosphoserine; by CDK1. Positions 204 and 226 each coordinate GTP. Phosphothreonine is present on residues Thr285 and Thr290. Omega-N-methylarginine is present on Arg318. Lys324 is covalently cross-linked (Glycyl lysine isopeptide (Lys-Gly) (interchain with G-Cter in ubiquitin)). The interval 422 to 445 (YQQYQDATADEQGEFEEEEGEDEA) is disordered. A compositionally biased stretch (acidic residues) spans 429–445 (TADEQGEFEEEEGEDEA). Glu438 is subject to 5-glutamyl polyglutamate.

This sequence belongs to the tubulin family. Interacts with ZNRF1. Part of a complex composed at least of ASH2L, EMSY, HCFC1, HSPA8, CCAR2, MATR3, MKI67, RBBP5, TUBB2A, WDR5 and ZNF335; this complex may have a histone H3-specific methyltransferase activity. Dimer of alpha and beta chains. A typical microtubule is a hollow water-filled tube with an outer diameter of 25 nm and an inner diameter of 15 nM. Alpha-beta heterodimers associate head-to-tail to form protofilaments running lengthwise along the microtubule wall with the beta-tubulin subunit facing the microtubule plus end conferring a structural polarity. Microtubules usually have 13 protofilaments but different protofilament numbers can be found in some organisms and specialized cells. Requires Mg(2+) as cofactor. Some glutamate residues at the C-terminus are polyglutamylated, resulting in polyglutamate chains on the gamma-carboxyl group. Polyglutamylation plays a key role in microtubule severing by spastin (SPAST). SPAST preferentially recognizes and acts on microtubules decorated with short polyglutamate tails: severing activity by SPAST increases as the number of glutamates per tubulin rises from one to eight, but decreases beyond this glutamylation threshold. Glutamylation is also involved in cilia motility. In terms of processing, some glutamate residues at the C-terminus are monoglycylated but not polyglycylated due to the absence of functional TTLL10 in human. Monoglycylation is mainly limited to tubulin incorporated into cilia and flagella axonemes, which is required for their stability and maintenance. Flagella glycylation controls sperm motility. Both polyglutamylation and monoglycylation can coexist on the same protein on adjacent residues, and lowering glycylation levels increases polyglutamylation, and reciprocally. Post-translationally, phosphorylated on Ser-172 by CDK1 during the cell cycle, from metaphase to telophase, but not in interphase. This phosphorylation inhibits tubulin incorporation into microtubules. As to expression, high expression in brain, where it represents 30% of all beta-tubulins.

It localises to the cytoplasm. The protein localises to the cytoskeleton. Its function is as follows. Tubulin is the major constituent of microtubules, a cylinder consisting of laterally associated linear protofilaments composed of alpha- and beta-tubulin heterodimers. Microtubules grow by the addition of GTP-tubulin dimers to the microtubule end, where a stabilizing cap forms. Below the cap, tubulin dimers are in GDP-bound state, owing to GTPase activity of alpha-tubulin. This chain is Tubulin beta-2A chain (TUBB2A), found in Homo sapiens (Human).